A 674-amino-acid chain; its full sequence is Ribosome biogenesis protein BOP1 homolog (674 aa).

The tract at residues 1-28 (MASTSAATPLKNKRKFENGKKKPKTLKD) is disordered. Over residues 15 to 28 (KFENGKKKPKTLKD) the composition is skewed to basic and acidic residues. 7 WD repeats span residues 342 to 384 (GHTG…KTFQ), 386 to 425 (DGEV…RLHV), 427 to 458 (QTEA…LMLK), 459 to 500 (MPNE…SQCP), 503 to 541 (KRKG…LVKK), 587 to 626 (HHTA…DFVK), and 643 to 674 (PNDL…LFTY).

It belongs to the WD repeat BOP1/ERB1 family.

The protein resides in the nucleus. It is found in the nucleolus. It localises to the nucleoplasm. In terms of biological role, required for maturation of ribosomal RNAs and formation of the large ribosomal subunit. The polypeptide is Ribosome biogenesis protein BOP1 homolog (Caenorhabditis elegans).